The following is a 1197-amino-acid chain: ATP-dependent helicase/nuclease subunit A (1197 aa).

The region spanning 2-458 is the UvrD-like helicase ATP-binding domain; sequence RQWTKEQQAA…IDLAKNFRSR (457 aa). 23–30 lines the ATP pocket; it reads AAAGSGKT. The UvrD-like helicase C-terminal domain occupies 485–774; it reads RAALYQGTEF…RIMSIHKSKG (290 aa).

It belongs to the helicase family. AddA subfamily. Heterodimer of AddA and AddB/RexB. Requires Mg(2+) as cofactor.

The catalysed reaction is Couples ATP hydrolysis with the unwinding of duplex DNA by translocating in the 3'-5' direction.. It catalyses the reaction ATP + H2O = ADP + phosphate + H(+). Functionally, the heterodimer acts as both an ATP-dependent DNA helicase and an ATP-dependent, dual-direction single-stranded exonuclease. Recognizes the chi site generating a DNA molecule suitable for the initiation of homologous recombination. The AddA nuclease domain is required for chi fragment generation; this subunit has the helicase and 3' -&gt; 5' nuclease activities. In Alkaliphilus oremlandii (strain OhILAs) (Clostridium oremlandii (strain OhILAs)), this protein is ATP-dependent helicase/nuclease subunit A.